The chain runs to 762 residues: Phosphoribosylformylglycinamidine synthase subunit PurL (762 aa).

His58 is an active-site residue. ATP is bound by residues Tyr61 and Arg105. Position 107 (Glu107) interacts with Mg(2+). Substrate-binding positions include 108–111 and Arg130; that span reads SHNH. The Proton acceptor role is filled by His109. Asp131 contacts Mg(2+). Gln255 contributes to the substrate binding site. Position 283 (Asp283) interacts with Mg(2+). 327-329 serves as a coordination point for substrate; sequence ESQ. ATP contacts are provided by Asn513 and Gly550. Asn551 serves as a coordination point for Mg(2+). Ser553 provides a ligand contact to substrate.

The protein belongs to the FGAMS family. In terms of assembly, monomer. Part of the FGAM synthase complex composed of 1 PurL, 1 PurQ and 2 PurS subunits.

It localises to the cytoplasm. It catalyses the reaction N(2)-formyl-N(1)-(5-phospho-beta-D-ribosyl)glycinamide + L-glutamine + ATP + H2O = 2-formamido-N(1)-(5-O-phospho-beta-D-ribosyl)acetamidine + L-glutamate + ADP + phosphate + H(+). The protein operates within purine metabolism; IMP biosynthesis via de novo pathway; 5-amino-1-(5-phospho-D-ribosyl)imidazole from N(2)-formyl-N(1)-(5-phospho-D-ribosyl)glycinamide: step 1/2. Its function is as follows. Part of the phosphoribosylformylglycinamidine synthase complex involved in the purines biosynthetic pathway. Catalyzes the ATP-dependent conversion of formylglycinamide ribonucleotide (FGAR) and glutamine to yield formylglycinamidine ribonucleotide (FGAM) and glutamate. The FGAM synthase complex is composed of three subunits. PurQ produces an ammonia molecule by converting glutamine to glutamate. PurL transfers the ammonia molecule to FGAR to form FGAM in an ATP-dependent manner. PurS interacts with PurQ and PurL and is thought to assist in the transfer of the ammonia molecule from PurQ to PurL. The chain is Phosphoribosylformylglycinamidine synthase subunit PurL from Corynebacterium glutamicum (strain R).